Reading from the N-terminus, the 217-residue chain is tRNA (guanine-N(7)-)-methyltransferase (217 aa).

S-adenosyl-L-methionine is bound by residues glutamate 56, glutamate 81, aspartate 108, and aspartate 130. Aspartate 130 is an active-site residue. The substrate site is built by lysine 134 and aspartate 166.

Belongs to the class I-like SAM-binding methyltransferase superfamily. TrmB family.

The enzyme catalyses guanosine(46) in tRNA + S-adenosyl-L-methionine = N(7)-methylguanosine(46) in tRNA + S-adenosyl-L-homocysteine. It functions in the pathway tRNA modification; N(7)-methylguanine-tRNA biosynthesis. Functionally, catalyzes the formation of N(7)-methylguanine at position 46 (m7G46) in tRNA. This is tRNA (guanine-N(7)-)-methyltransferase from Neorickettsia sennetsu (strain ATCC VR-367 / Miyayama) (Ehrlichia sennetsu).